Consider the following 336-residue polypeptide: Potassium channel subfamily K member 1 (336 aa).

Topologically, residues 1–20 (MLQSLAGSSCVRLVERHRSA) are cytoplasmic. A helical membrane pass occupies residues 21-41 (WCFGFLVLGYLLYLVFGAVVF). The Extracellular portion of the chain corresponds to 42–103 (SSVELPYEDL…SNASGNWNWD (62 aa)). Asn95 is a glycosylation site (N-linked (GlcNAc...) asparagine). The helical intramembrane region spans 104–116 (FTSALFFASTVLS). Residues 117–122 (TTGYGH) lie within the membrane without spanning it. The interval 117-122 (TTGYGH) is selectivity filter 1. Residues 123–132 (TVPLSDGGKA) are Extracellular-facing. A helical transmembrane segment spans residues 133–156 (FCIIYSVIGIPFTLLFLTAVVQRV). Topologically, residues 157–181 (TVHVTRRPVLYFHIRWGFSKQVVAI) are cytoplasmic. A helical membrane pass occupies residues 182-202 (VHAVLLGFVTVSCFFFIPAAV). Residues 203–211 (FSVLEDDWN) are Extracellular-facing. An intramembrane region (helical) is located at residues 212–224 (FLESFYFCFISLS). The selectivity filter 2 stretch occupies residues 225–230 (TIGLGD). An intramembrane segment occupies 225 to 231 (TIGLGDY). Residues 232-243 (VPGEGYNQKFRE) lie on the Extracellular side of the membrane. The chain crosses the membrane as a helical span at residues 244 to 267 (LYKIGITCYLLLGLIAMLVVLETF). The Cytoplasmic segment spans residues 268–336 (CELHELKKFR…PPYEDGSADH (69 aa)). A Glycyl lysine isopeptide (Lys-Gly) (interchain with G-Cter in SUMO) cross-link involves residue Lys274. The tract at residues 293–299 (IMEHDQL) is important for intracellular retention in recycling endosomes. The disordered stretch occupies residues 310-336 (GLKEEQKQSEPFVASQSPPYEDGSADH). A Phosphoserine modification is found at Ser326.

Belongs to the two pore domain potassium channel (TC 1.A.1.8) family. Homodimer; disulfide-linked. Heterodimer with KCNK2; disulfide-linked. In astrocytes, forms mostly heterodimeric potassium channels with KCNK2, with only a minor proportion of functional channels containing homodimeric KCNK1. Interacts with KCNK3 and KCNK9, forming functional heterodimeric channels. Interacts with GNG4. Identified in a complex with PSD and ARF6; interacts only with PSD that is bound to ARF6. Interacts with UBE2I. Post-translationally, sumoylation is controversial. Sumoylated by UBE2I. Not sumoylated when expressed in xenopus oocytes or mammalian cells. Sumoylation inactivates the channel, but does not interfere with expression at the cell membrane. Sumoylation of a single subunit is sufficient to silence the dimeric channel. Sumoylation of KCNK1 is sufficient to silence heterodimeric channels formed by KCNK1 and KCNK3 or KCNK9. Desumoylated by SENP1; this activates the channel. Desumoylated by SENP1; this strongly increases halothane-mediated activation of heterodimeric channels formed with KCNK9. SENP1 treatment has no effect. As to expression, detected in spiral ganglion neurons. Detected in hippocampus CA1 and CA1 regions and in the molecular layer of the dentate gyrus. Detected on hippocampus astrocytes. Highly expressed in the stria vascularis in the cochlea. Detected in pancreas islet beta cells. Detected in kidney, at brush border membranes in proximal tubules and in cytoplasmic structures in distal convoluted tubules, thick ascending limbs and collecting ducts (at protein level). Widely expressed. Detected in spiral ganglion cells. Highest expression in brain, kidney, thyroid, salivary gland, adrenal gland, prostate, epididymis, uterus, placenta, colon and jejunum. Moderate expression in eyes, pituitary, pancreas, smooth muscle, testis and ovary. Very low levels in lung, aorta, liver, heart, skeletal muscle, thymus and spleen. In the brain, highest expression in cerebellar granule cells, brainstem, hippocampus and cerebral cortex.

The protein localises to the cell membrane. It is found in the recycling endosome. Its subcellular location is the apical cell membrane. It localises to the cytoplasmic vesicle. The protein resides in the perikaryon. The protein localises to the cell projection. It is found in the dendrite. Its subcellular location is the synaptic cell membrane. It catalyses the reaction K(+)(in) = K(+)(out). It carries out the reaction NH4(+)(in) = NH4(+)(out). The enzyme catalyses Na(+)(in) = Na(+)(out). The catalysed reaction is Rb(+)(in) = Rb(+)(out). It catalyses the reaction Cs(+)(in) = Cs(+)(out). It carries out the reaction Li(+)(in) = Li(+)(out). The enzyme catalyses L-glutamate(out) = L-glutamate(in). The catalysed reaction is chloride(in) = chloride(out). With respect to regulation, inhibited by quinine, quinidine, barium, and internal acidification. Its function is as follows. Ion channel that contributes to passive transmembrane potassium transport and to the regulation of the resting membrane potential in brain astrocytes, but also in kidney and in other tissues. Forms dimeric channels through which potassium ions pass in accordance with their electrochemical gradient. The channel is selective for K(+) ions at physiological potassium concentrations and at neutral pH, but becomes permeable to Na(+) at subphysiological K(+) levels and upon acidification of the extracellular medium. The homodimer has very low potassium channel activity, when expressed in heterologous systems, and can function as weakly inward rectifying potassium channel. Channel activity is modulated by activation of serotonin receptors. Heterodimeric channels containing KCNK1 and KCNK2 have much higher activity, and may represent the predominant form in astrocytes. Heterodimeric channels containing KCNK1 and KCNK3 or KCNK9 have much higher activity. Heterodimeric channels formed by KCNK1 and KCNK9 may contribute to halothane-sensitive currents. Mediates outward rectifying potassium currents in dentate gyrus granule cells and contributes to the regulation of their resting membrane potential. Contributes to the regulation of action potential firing in dentate gyrus granule cells and down-regulates their intrinsic excitability. In astrocytes, the heterodimer formed by KCNK1 and KCNK2 is required for rapid glutamate release in response to activation of G-protein coupled receptors, such as F2R and CNR1. Required for normal ion and water transport in the kidney. Contributes to the regulation of the resting membrane potential of pancreatic beta cells. The low channel activity of homodimeric KCNK1 may be due to sumoylation. The low channel activity may be due to rapid internalization from the cell membrane and retention in recycling endosomes. Permeable to monovalent cations with ion selectivity for K(+) &gt; Rb(+) &gt;&gt; NH4(+) &gt;&gt; Cs(+) = Na(+) = Li(+). This chain is Potassium channel subfamily K member 1 (Kcnk1), found in Mus musculus (Mouse).